Consider the following 357-residue polypeptide: Probable nitronate monooxygenase (357 aa).

Residues Asn71, Gln175, Gly180, Gly219, and 238-241 (QMGT) contribute to the FMN site.

The protein belongs to the nitronate monooxygenase family. NMO class I subfamily. Requires FMN as cofactor.

The enzyme catalyses 3 propionate 3-nitronate + 3 O2 + H2O = 3 3-oxopropanoate + 2 nitrate + nitrite + H2O2 + 3 H(+). Nitronate monooxygenase that uses molecular oxygen to catalyze the oxidative denitrification of alkyl nitronates. Acts on propionate 3-nitronate (P3N), the presumed physiological substrate. Probably functions in the detoxification of P3N, a metabolic poison produced by plants and fungi as a defense mechanism. The chain is Probable nitronate monooxygenase from Staphylococcus haemolyticus (strain JCSC1435).